The sequence spans 569 residues: Methionine--tRNA ligase (569 aa).

Positions 11–21 (PYINGVKHLGN) match the 'HIGH' region motif. Zn(2+) contacts are provided by cysteine 143, cysteine 146, cysteine 156, and cysteine 159. A 'KMSKS' region motif is present at residues 342-346 (KFSTS). Position 345 (threonine 345) interacts with ATP.

It belongs to the class-I aminoacyl-tRNA synthetase family. MetG type 1 subfamily. In terms of assembly, monomer. Zn(2+) serves as cofactor.

Its subcellular location is the cytoplasm. It catalyses the reaction tRNA(Met) + L-methionine + ATP = L-methionyl-tRNA(Met) + AMP + diphosphate. Its function is as follows. Is required not only for elongation of protein synthesis but also for the initiation of all mRNA translation through initiator tRNA(fMet) aminoacylation. The protein is Methionine--tRNA ligase of Caulobacter sp. (strain K31).